We begin with the raw amino-acid sequence, 436 residues long: 3-ketoacyl-CoA thiolase (436 aa).

C99 functions as the Acyl-thioester intermediate in the catalytic mechanism. Active-site proton acceptor residues include H392 and C422.

Belongs to the thiolase-like superfamily. Thiolase family. In terms of assembly, heterotetramer of two alpha chains (FadJ) and two beta chains (FadI).

Its subcellular location is the cytoplasm. It catalyses the reaction an acyl-CoA + acetyl-CoA = a 3-oxoacyl-CoA + CoA. It functions in the pathway lipid metabolism; fatty acid beta-oxidation. Catalyzes the final step of fatty acid oxidation in which acetyl-CoA is released and the CoA ester of a fatty acid two carbons shorter is formed. This is 3-ketoacyl-CoA thiolase from Shewanella sp. (strain ANA-3).